A 153-amino-acid chain; its full sequence is Arginine repressor (153 aa).

The protein belongs to the ArgR family.

It localises to the cytoplasm. It functions in the pathway amino-acid biosynthesis; L-arginine biosynthesis [regulation]. In terms of biological role, regulates arginine biosynthesis genes. The protein is Arginine repressor of Acetivibrio thermocellus (strain ATCC 27405 / DSM 1237 / JCM 9322 / NBRC 103400 / NCIMB 10682 / NRRL B-4536 / VPI 7372) (Clostridium thermocellum).